A 704-amino-acid chain; its full sequence is Polyribonucleotide nucleotidyltransferase (704 aa).

2 residues coordinate Mg(2+): D486 and D492. Residues 553–612 (PRIYTMKINPEKIKDVIGKGGSVIRALTDETGTTIEIEDDGTIKIAATDGDKAKHAIRRI) form the KH domain. An S1 motif domain is found at 622 to 690 (GRIYAGKVTR…RQGRIRLSIK (69 aa)).

It belongs to the polyribonucleotide nucleotidyltransferase family. Component of the RNA degradosome, which is a multiprotein complex involved in RNA processing and mRNA degradation. It depends on Mg(2+) as a cofactor.

The protein resides in the cytoplasm. The enzyme catalyses RNA(n+1) + phosphate = RNA(n) + a ribonucleoside 5'-diphosphate. Its function is as follows. Involved in mRNA degradation. Catalyzes the phosphorolysis of single-stranded polyribonucleotides processively in the 3'- to 5'-direction. The sequence is that of Polyribonucleotide nucleotidyltransferase from Yersinia pseudotuberculosis serotype IB (strain PB1/+).